Consider the following 202-residue polypeptide: PXMP2/4 family protein 1 (202 aa).

A run of 4 helical transmembrane segments spans residues 21–41, 54–72, 138–154, and 161–177; these read PVIT…TLAQ, LMMC…HFWF, KAWM…FRFV, and LISN…LSTV.

It belongs to the peroxisomal membrane protein PXMP2/4 family.

It localises to the membrane. The polypeptide is PXMP2/4 family protein 1 (Dictyostelium discoideum (Social amoeba)).